We begin with the raw amino-acid sequence, 172 residues long: UPF0316 protein Clos_0555 (172 aa).

A run of 3 helical transmembrane segments spans residues 3–23 (ALLG…MATI), 34–54 (VIAA…IGKV), and 61–81 (PLNV…GIFL).

Belongs to the UPF0316 family.

The protein localises to the cell membrane. In Alkaliphilus oremlandii (strain OhILAs) (Clostridium oremlandii (strain OhILAs)), this protein is UPF0316 protein Clos_0555.